The following is a 346-amino-acid chain: Phosphate acyltransferase (346 aa).

This sequence belongs to the PlsX family. As to quaternary structure, homodimer. Probably interacts with PlsY.

Its subcellular location is the cytoplasm. The catalysed reaction is a fatty acyl-[ACP] + phosphate = an acyl phosphate + holo-[ACP]. The protein operates within lipid metabolism; phospholipid metabolism. Its function is as follows. Catalyzes the reversible formation of acyl-phosphate (acyl-PO(4)) from acyl-[acyl-carrier-protein] (acyl-ACP). This enzyme utilizes acyl-ACP as fatty acyl donor, but not acyl-CoA. The protein is Phosphate acyltransferase of Geotalea uraniireducens (strain Rf4) (Geobacter uraniireducens).